The primary structure comprises 159 residues: Transcription elongation factor GreA (159 aa).

The stretch at 1-76 forms a coiled coil; sequence MAEEKEVVLT…SLEKTLKKAR (76 aa).

The protein belongs to the GreA/GreB family.

In terms of biological role, necessary for efficient RNA polymerase transcription elongation past template-encoded arresting sites. The arresting sites in DNA have the property of trapping a certain fraction of elongating RNA polymerases that pass through, resulting in locked ternary complexes. Cleavage of the nascent transcript by cleavage factors such as GreA or GreB allows the resumption of elongation from the new 3'terminus. GreA releases sequences of 2 to 3 nucleotides. This chain is Transcription elongation factor GreA, found in Syntrophomonas wolfei subsp. wolfei (strain DSM 2245B / Goettingen).